Consider the following 664-residue polypeptide: Intraflagellar transport protein 70A1 (664 aa).

TPR repeat units follow at residues 11–44 (DGEF…SSRS), 45–78 (RAGL…HPEL), 153–186 (PDGL…SGYQ), 188–220 (DLSY…GIRQ), 393–423 (TKQV…EKYI), 424–456 (PVLM…CNDH), and 458–491 (VWKL…NYDN). Residues 507-534 (YIMTSQNEEAEELMRKIEKEEEQLSYGD) are a coiled coil. The TPR 8 repeat unit spans residues 543-576 (CIVNLVIGTLYCAKGNYDFGISRVIKSLEPYHKK).

The protein belongs to the TTC30/dfy-1/fleer family. As to quaternary structure, interacts wit the IFT B complex component IFT52.

The protein resides in the cell projection. Its subcellular location is the cilium. Required for polyglutamylation of axonemal tubulin. Plays a role in anterograde intraflagellar transport (IFT), the process by which cilia precursors are transported from the base of the cilium to the site of their incorporation at the tip. The polypeptide is Intraflagellar transport protein 70A1 (Ift70a1) (Mus musculus (Mouse)).